The chain runs to 460 residues: MDSIVTTEDTIAAIASAISIGKGGVAIIRVSGKDAINSCKKIVQTKSKYAWESHRVFRGFIQENKQNKFIDEVLILVMKSPNSFTGEDVVELHCHGGIIIVNKVLKILLSSNSRVRIANPGEFSQRAFLNGKIDLTQAESINQLINASNTRSAELAFSGIQGEIKKKIDDIKNDLINQLCEIEARVDFEEDFTDFDYTKYLKNIKKVKEKIELLIENAKRNSYIHNGISIALIGKTNVGKSSLLNLLAKKEKAIVTNIPGTTRDVIEVNLTINDIPMKIIDTAGIRETYEQIESIGIKKSFGKIKESDFIIYIYSLEEGFNEEDKKIIQEIPKEKLITILGNKKDLIDCKNINSNELKNTILMSIKNNDGEKLLIDTIIKKCGLKQVENINIFLNERHQTNLSACLSNLNDTDEIIENKLPFDLLSIELRDGIQNLSKITGQELTEELLDNIFSKFCIGK.

(6S)-5-formyl-5,6,7,8-tetrahydrofolate-binding residues include R29, E91, and K132. The TrmE-type G domain occupies 227–383; the sequence is GISIALIGKT…LIDTIIKKCG (157 aa). Residue N237 coordinates K(+). GTP contacts are provided by residues 237-242, 256-262, and 281-284; these read NVGKSS, TNIPGTT, and DTAG. S241 is a Mg(2+) binding site. Residues T256, I258, and T261 each contribute to the K(+) site. Residue T262 coordinates Mg(2+). (6S)-5-formyl-5,6,7,8-tetrahydrofolate is bound at residue K460.

The protein belongs to the TRAFAC class TrmE-Era-EngA-EngB-Septin-like GTPase superfamily. TrmE GTPase family. As to quaternary structure, homodimer. Heterotetramer of two MnmE and two MnmG subunits. Requires K(+) as cofactor.

The protein resides in the cytoplasm. In terms of biological role, exhibits a very high intrinsic GTPase hydrolysis rate. Involved in the addition of a carboxymethylaminomethyl (cmnm) group at the wobble position (U34) of certain tRNAs, forming tRNA-cmnm(5)s(2)U34. The sequence is that of tRNA modification GTPase MnmE from Prochlorococcus marinus (strain MIT 9301).